The sequence spans 133 residues: Large ribosomal subunit protein bL20 (133 aa).

Belongs to the bacterial ribosomal protein bL20 family.

Functionally, binds directly to 23S ribosomal RNA and is necessary for the in vitro assembly process of the 50S ribosomal subunit. It is not involved in the protein synthesizing functions of that subunit. The polypeptide is Large ribosomal subunit protein bL20 (Bartonella tribocorum (strain CIP 105476 / IBS 506)).